We begin with the raw amino-acid sequence, 279 residues long: Apolipoprotein L domain-containing protein 1 (279 aa).

Helical transmembrane passes span serine 83 to leucine 105, glycine 122 to phenylalanine 142, and isoleucine 192 to proline 212. Residues leucine 226 to serine 253 are a coiled coil.

This sequence belongs to the apolipoprotein L family. As to expression, expressed in neonatal dermal microvascular endothelial cells.

The protein localises to the cell membrane. The protein resides in the cell junction. Its subcellular location is the cytoplasmic vesicle. It is found in the secretory vesicle. Its function is as follows. Is a modulator of endothelial barrier permeability, required for proper organization of endothelial cell-cell junctions and cytoskeleton. It also plays a role in the modulation of secretory autophagy. May affect blood-brain barrier permeability. The protein is Apolipoprotein L domain-containing protein 1 (APOLD1) of Homo sapiens (Human).